Here is a 401-residue protein sequence, read N- to C-terminus: Putative phosphatidylinositol 4-phosphate 5-kinase 11 (401 aa).

One can recognise a PIPK domain in the interval 1 to 390 (MELRATVENR…RFQDFVSNIF (390 aa)). Residues 242–260 (SFKSNSTKSMKTASSSPDR) show a composition bias toward polar residues. The disordered stretch occupies residues 242 to 268 (SFKSNSTKSMKTASSSPDRSSVAMYSC). The segment at 350–371 (YGMKKRIEHCYKSIQYNSNSIS) is activation loop.

It catalyses the reaction a 1,2-diacyl-sn-glycero-3-phospho-(1D-myo-inositol 4-phosphate) + ATP = a 1,2-diacyl-sn-glycero-3-phospho-(1D-myo-inositol-4,5-bisphosphate) + ADP + H(+). The protein is Putative phosphatidylinositol 4-phosphate 5-kinase 11 (PIP5K11) of Arabidopsis thaliana (Mouse-ear cress).